The primary structure comprises 517 residues: Serine carboxypeptidase ctsa-3.2 (517 aa).

The signal sequence occupies residues 1 to 21 (MWWTSLVFSVLLFDLIFISNC). Ser172 is a catalytic residue. N-linked (GlcNAc...) asparagine glycosylation occurs at Asn269. Residues Asp418 and His485 contribute to the active site.

It belongs to the peptidase S10 family.

The sequence is that of Serine carboxypeptidase ctsa-3.2 from Caenorhabditis elegans.